The following is a 256-amino-acid chain: DNA repair protein RecO (256 aa).

Belongs to the RecO family.

Functionally, involved in DNA repair and RecF pathway recombination. The protein is DNA repair protein RecO of Clostridium novyi (strain NT).